Reading from the N-terminus, the 382-residue chain is Bifunctional enzyme IspD/IspF (382 aa).

Positions 1 to 225 (MTGKPSIAAL…AEERMAMISR (225 aa)) are 2-C-methyl-D-erythritol 4-phosphate cytidylyltransferase. Residues 225 to 382 (RTAMGFDVHG…AVATVRVPSI (158 aa)) are 2-C-methyl-D-erythritol 2,4-cyclodiphosphate synthase. Residues D231 and H233 each contribute to the a divalent metal cation site. 4-CDP-2-C-methyl-D-erythritol 2-phosphate-binding positions include 231 to 233 (DVH) and 257 to 258 (HS). An a divalent metal cation-binding site is contributed by H265. 4-CDP-2-C-methyl-D-erythritol 2-phosphate is bound by residues 279-281 (DIG), 355-358 (TTTE), F362, and R365.

In the N-terminal section; belongs to the IspD/TarI cytidylyltransferase family. IspD subfamily. It in the C-terminal section; belongs to the IspF family. It depends on a divalent metal cation as a cofactor.

It catalyses the reaction 2-C-methyl-D-erythritol 4-phosphate + CTP + H(+) = 4-CDP-2-C-methyl-D-erythritol + diphosphate. The enzyme catalyses 4-CDP-2-C-methyl-D-erythritol 2-phosphate = 2-C-methyl-D-erythritol 2,4-cyclic diphosphate + CMP. The protein operates within isoprenoid biosynthesis; isopentenyl diphosphate biosynthesis via DXP pathway; isopentenyl diphosphate from 1-deoxy-D-xylulose 5-phosphate: step 2/6. It functions in the pathway isoprenoid biosynthesis; isopentenyl diphosphate biosynthesis via DXP pathway; isopentenyl diphosphate from 1-deoxy-D-xylulose 5-phosphate: step 4/6. Bifunctional enzyme that catalyzes the formation of 4-diphosphocytidyl-2-C-methyl-D-erythritol from CTP and 2-C-methyl-D-erythritol 4-phosphate (MEP) (IspD), and catalyzes the conversion of 4-diphosphocytidyl-2-C-methyl-D-erythritol 2-phosphate (CDP-ME2P) to 2-C-methyl-D-erythritol 2,4-cyclodiphosphate (ME-CPP) with a corresponding release of cytidine 5-monophosphate (CMP) (IspF). The sequence is that of Bifunctional enzyme IspD/IspF from Rhizorhabdus wittichii (strain DSM 6014 / CCUG 31198 / JCM 15750 / NBRC 105917 / EY 4224 / RW1) (Sphingomonas wittichii).